We begin with the raw amino-acid sequence, 250 residues long: Cell division protein ZapD (250 aa).

The protein belongs to the ZapD family. In terms of assembly, interacts with FtsZ.

It localises to the cytoplasm. Cell division factor that enhances FtsZ-ring assembly. Directly interacts with FtsZ and promotes bundling of FtsZ protofilaments, with a reduction in FtsZ GTPase activity. In Serratia proteamaculans (strain 568), this protein is Cell division protein ZapD.